A 515-amino-acid polypeptide reads, in one-letter code: Bifunctional purine biosynthesis protein PurH (515 aa).

One can recognise an MGS-like domain in the interval 1-145 (MTKRVLISVS…KNHASVTVVV (145 aa)).

It belongs to the PurH family.

It catalyses the reaction (6R)-10-formyltetrahydrofolate + 5-amino-1-(5-phospho-beta-D-ribosyl)imidazole-4-carboxamide = 5-formamido-1-(5-phospho-D-ribosyl)imidazole-4-carboxamide + (6S)-5,6,7,8-tetrahydrofolate. The catalysed reaction is IMP + H2O = 5-formamido-1-(5-phospho-D-ribosyl)imidazole-4-carboxamide. Its pathway is purine metabolism; IMP biosynthesis via de novo pathway; 5-formamido-1-(5-phospho-D-ribosyl)imidazole-4-carboxamide from 5-amino-1-(5-phospho-D-ribosyl)imidazole-4-carboxamide (10-formyl THF route): step 1/1. The protein operates within purine metabolism; IMP biosynthesis via de novo pathway; IMP from 5-formamido-1-(5-phospho-D-ribosyl)imidazole-4-carboxamide: step 1/1. The chain is Bifunctional purine biosynthesis protein PurH from Streptococcus pneumoniae (strain Taiwan19F-14).